A 123-amino-acid chain; its full sequence is Large ribosomal subunit protein bL12 (123 aa).

It belongs to the bacterial ribosomal protein bL12 family. As to quaternary structure, homodimer. Part of the ribosomal stalk of the 50S ribosomal subunit. Forms a multimeric L10(L12)X complex, where L10 forms an elongated spine to which 2 to 4 L12 dimers bind in a sequential fashion. Binds GTP-bound translation factors.

Functionally, forms part of the ribosomal stalk which helps the ribosome interact with GTP-bound translation factors. Is thus essential for accurate translation. This chain is Large ribosomal subunit protein bL12, found in Roseobacter denitrificans (strain ATCC 33942 / OCh 114) (Erythrobacter sp. (strain OCh 114)).